The following is a 399-amino-acid chain: Putative 8-amino-7-oxononanoate synthase (399 aa).

Position 23 (R23) interacts with substrate. 110–111 (GY) contacts pyridoxal 5'-phosphate. H135 lines the substrate pocket. Pyridoxal 5'-phosphate is bound by residues S183, 208–211 (DEAH), and 239–242 (TLSK). K242 carries the post-translational modification N6-(pyridoxal phosphate)lysine. A substrate-binding site is contributed by T364.

It belongs to the class-II pyridoxal-phosphate-dependent aminotransferase family. BioF subfamily. Homodimer. It depends on pyridoxal 5'-phosphate as a cofactor.

The enzyme catalyses 6-carboxyhexanoyl-[ACP] + L-alanine + H(+) = (8S)-8-amino-7-oxononanoate + holo-[ACP] + CO2. The protein operates within cofactor biosynthesis; biotin biosynthesis. Catalyzes the decarboxylative condensation of pimeloyl-[acyl-carrier protein] and L-alanine to produce 8-amino-7-oxononanoate (AON), [acyl-carrier protein], and carbon dioxide. The sequence is that of Putative 8-amino-7-oxononanoate synthase (bioF) from Cyanothece sp. (strain PCC 7425 / ATCC 29141).